The following is a 417-amino-acid chain: S-adenosylmethionine synthase (417 aa).

H16 is a binding site for ATP. Residue D18 participates in Mg(2+) binding. E44 serves as a coordination point for K(+). 2 residues coordinate L-methionine: E57 and Q100. Residues 100 to 110 are flexible loop; it reads QSPDIAQGVTS. Residues 175 to 177, 251 to 252, D260, 266 to 267, A283, and K287 contribute to the ATP site; these read DGK, KF, and RK. Position 260 (D260) interacts with L-methionine. K291 provides a ligand contact to L-methionine.

Belongs to the AdoMet synthase family. In terms of assembly, homotetramer; dimer of dimers. Requires Mg(2+) as cofactor. The cofactor is K(+).

The protein localises to the cytoplasm. It carries out the reaction L-methionine + ATP + H2O = S-adenosyl-L-methionine + phosphate + diphosphate. The protein operates within amino-acid biosynthesis; S-adenosyl-L-methionine biosynthesis; S-adenosyl-L-methionine from L-methionine: step 1/1. Functionally, catalyzes the formation of S-adenosylmethionine (AdoMet) from methionine and ATP. The overall synthetic reaction is composed of two sequential steps, AdoMet formation and the subsequent tripolyphosphate hydrolysis which occurs prior to release of AdoMet from the enzyme. This is S-adenosylmethionine synthase from Picosynechococcus sp. (strain ATCC 27264 / PCC 7002 / PR-6) (Agmenellum quadruplicatum).